Reading from the N-terminus, the 251-residue chain is Segregation and condensation protein A (251 aa).

This sequence belongs to the ScpA family. As to quaternary structure, component of a cohesin-like complex composed of ScpA, ScpB and the Smc homodimer, in which ScpA and ScpB bind to the head domain of Smc. The presence of the three proteins is required for the association of the complex with DNA.

Its subcellular location is the cytoplasm. Participates in chromosomal partition during cell division. May act via the formation of a condensin-like complex containing Smc and ScpB that pull DNA away from mid-cell into both cell halves. This is Segregation and condensation protein A from Bacillus licheniformis (strain ATCC 14580 / DSM 13 / JCM 2505 / CCUG 7422 / NBRC 12200 / NCIMB 9375 / NCTC 10341 / NRRL NRS-1264 / Gibson 46).